A 274-amino-acid chain; its full sequence is Large ribosomal subunit protein uL2 (274 aa).

The interval Ala-224–Arg-259 is disordered.

This sequence belongs to the universal ribosomal protein uL2 family. In terms of assembly, part of the 50S ribosomal subunit. Forms a bridge to the 30S subunit in the 70S ribosome.

Its function is as follows. One of the primary rRNA binding proteins. Required for association of the 30S and 50S subunits to form the 70S ribosome, for tRNA binding and peptide bond formation. It has been suggested to have peptidyltransferase activity; this is somewhat controversial. Makes several contacts with the 16S rRNA in the 70S ribosome. This is Large ribosomal subunit protein uL2 from Geobacter sp. (strain M21).